We begin with the raw amino-acid sequence, 350 residues long: Methylthioribose-1-phosphate isomerase (350 aa).

Substrate is bound by residues 47-49 (RGA), Arg-90, and Gln-197. Asp-238 functions as the Proton donor in the catalytic mechanism. 248–249 (NK) contacts substrate.

Belongs to the eIF-2B alpha/beta/delta subunits family. MtnA subfamily.

The catalysed reaction is 5-(methylsulfanyl)-alpha-D-ribose 1-phosphate = 5-(methylsulfanyl)-D-ribulose 1-phosphate. Its pathway is amino-acid biosynthesis; L-methionine biosynthesis via salvage pathway; L-methionine from S-methyl-5-thio-alpha-D-ribose 1-phosphate: step 1/6. Functionally, catalyzes the interconversion of methylthioribose-1-phosphate (MTR-1-P) into methylthioribulose-1-phosphate (MTRu-1-P). This Nitratidesulfovibrio vulgaris (strain DP4) (Desulfovibrio vulgaris) protein is Methylthioribose-1-phosphate isomerase.